Here is a 229-residue protein sequence, read N- to C-terminus: uncharacterized protein (229 aa).

22–29 (GMIAFGKT) provides a ligand contact to ATP.

This is an uncharacterized protein from Mycoplasma pneumoniae (strain ATCC 29342 / M129 / Subtype 1) (Mycoplasmoides pneumoniae).